The primary structure comprises 2472 residues: Spectrin alpha chain, non-erythrocytic 1 (2472 aa).

Methionine 1 is modified (N-acetylmethionine). 9 Spectrin repeats span residues arginine 45 to leucine 146, lysine 150 to leucine 251, glutamate 256 to aspartate 358, tyrosine 361 to glutamine 465, aspartate 468 to alanine 570, histidine 574 to glutamate 676, glutamine 679 to alanine 781, arginine 785 to aspartate 888, and glutamine 891 to alanine 961. Serine 587 is subject to Phosphoserine. Lysine 637 carries the N6-acetyllysine modification. Lysine 803 is subject to N6-acetyllysine. A phosphoserine mark is found at serine 924, serine 982, serine 999, serine 1029, serine 1031, and serine 1041. Residues threonine 967 to proline 1026 form the SH3 domain. Residues leucine 1096–glutamate 1166 form a Spectrin 10 repeat. At tyrosine 1176 the chain carries Phosphotyrosine. Serine 1190, serine 1207, serine 1217, serine 1291, serine 1306, serine 1323, and serine 1338 each carry phosphoserine. Residues histidine 1233–glycine 1336 form a Spectrin 11 repeat. 2 Spectrin repeats span residues histidine 1339–leucine 1441 and glutamate 1446–glutamate 1549. An N6-acetyllysine modification is found at lysine 1519. A phosphoserine mark is found at serine 1550, serine 1557, serine 1578, serine 1615, and serine 1647. Spectrin repeat units lie at residues threonine 1552–glutamate 1656, lysine 1659–glutamate 1762, histidine 1764–glutamate 1868, glutamate 1871–glutamate 1974, phenylalanine 1978–glutamate 2081, leucine 2092–glutamine 2194, and leucine 2206–glutamine 2310. Threonine 2020 is modified (phosphothreonine). Lysine 2052 is modified (N6-acetyllysine). Threonine 2066 is subject to Phosphothreonine. EF-hand domains are found at residues glutamate 2323 to aspartate 2358, glutamate 2366 to glutamate 2401, and lysine 2404 to aspartate 2439. Ca(2+) is bound by residues aspartate 2336, aspartate 2338, serine 2340, arginine 2342, glutamate 2347, aspartate 2379, asparagine 2381, aspartate 2383, histidine 2385, and glutamate 2390. N6-acetyllysine is present on lysine 2421.

Belongs to the spectrin family. Like erythrocyte spectrin, the spectrin-like proteins are capable of forming dimers which can further associate to tetramers. Interacts (via C-terminal spectrin repeats) with TRPC4. Interacts with CALM and EMD. Interacts with isoform 1 of ACP1. Identified in a complex with ACTN4, CASK, IQGAP1, MAGI2, NPHS1 and SPTBN1. Interacts with SHANK3 (via ANK repeats). Interacts with CLN3; this interaction regulates the fodrin localization at the plasma membrane. Phosphorylation of Tyr-1176 decreases sensitivity to cleavage by calpain in vitro.

It is found in the cytoplasm. It localises to the cytoskeleton. The protein localises to the cell cortex. Fodrin, which seems to be involved in secretion, interacts with calmodulin in a calcium-dependent manner and is thus candidate for the calcium-dependent movement of the cytoskeleton at the membrane. The protein is Spectrin alpha chain, non-erythrocytic 1 (Sptan1) of Mus musculus (Mouse).